Consider the following 90-residue polypeptide: Small ribosomal subunit protein bS20 (90 aa).

This sequence belongs to the bacterial ribosomal protein bS20 family.

In terms of biological role, binds directly to 16S ribosomal RNA. This Francisella philomiragia subsp. philomiragia (strain ATCC 25017 / CCUG 19701 / FSC 153 / O#319-036) protein is Small ribosomal subunit protein bS20.